Reading from the N-terminus, the 341-residue chain is Ribosomal RNA small subunit methyltransferase H (341 aa).

Residues 47 to 49, aspartate 64, phenylalanine 91, aspartate 109, and glutamine 116 contribute to the S-adenosyl-L-methionine site; that span reads GGY.

The protein belongs to the methyltransferase superfamily. RsmH family.

The protein localises to the cytoplasm. It carries out the reaction cytidine(1402) in 16S rRNA + S-adenosyl-L-methionine = N(4)-methylcytidine(1402) in 16S rRNA + S-adenosyl-L-homocysteine + H(+). Functionally, specifically methylates the N4 position of cytidine in position 1402 (C1402) of 16S rRNA. The sequence is that of Ribosomal RNA small subunit methyltransferase H from Agrobacterium fabrum (strain C58 / ATCC 33970) (Agrobacterium tumefaciens (strain C58)).